The following is a 499-amino-acid chain: Chaperone SurA (499 aa).

An N-terminal signal peptide occupies residues 1–36; sequence MKRQEFALFSLTLMLSPWRRVLLPAVLAAMAGPALA. PpiC domains lie at 231 to 333 and 352 to 450; these read PTEF…KLTA and ITQT…QVEN.

It is found in the periplasm. It catalyses the reaction [protein]-peptidylproline (omega=180) = [protein]-peptidylproline (omega=0). Functionally, chaperone involved in the correct folding and assembly of outer membrane proteins. Recognizes specific patterns of aromatic residues and the orientation of their side chains, which are found more frequently in integral outer membrane proteins. May act in both early periplasmic and late outer membrane-associated steps of protein maturation. The chain is Chaperone SurA from Cupriavidus pinatubonensis (strain JMP 134 / LMG 1197) (Cupriavidus necator (strain JMP 134)).